A 74-amino-acid chain; its full sequence is ATP synthase subunit c (74 aa).

Helical transmembrane passes span 8–28 and 52–72; these read FIGAGLAAIGMIGSGIGVGNI and IGFAVTEAIALFALVVALMVL.

It belongs to the ATPase C chain family. As to quaternary structure, F-type ATPases have 2 components, F(1) - the catalytic core - and F(0) - the membrane proton channel. F(1) has five subunits: alpha(3), beta(3), gamma(1), delta(1), epsilon(1). F(0) has three main subunits: a(1), b(2) and c(10-14). The alpha and beta chains form an alternating ring which encloses part of the gamma chain. F(1) is attached to F(0) by a central stalk formed by the gamma and epsilon chains, while a peripheral stalk is formed by the delta and b chains.

It localises to the cell inner membrane. F(1)F(0) ATP synthase produces ATP from ADP in the presence of a proton or sodium gradient. F-type ATPases consist of two structural domains, F(1) containing the extramembraneous catalytic core and F(0) containing the membrane proton channel, linked together by a central stalk and a peripheral stalk. During catalysis, ATP synthesis in the catalytic domain of F(1) is coupled via a rotary mechanism of the central stalk subunits to proton translocation. Its function is as follows. Key component of the F(0) channel; it plays a direct role in translocation across the membrane. A homomeric c-ring of between 10-14 subunits forms the central stalk rotor element with the F(1) delta and epsilon subunits. The polypeptide is ATP synthase subunit c (Paramagnetospirillum magneticum (strain ATCC 700264 / AMB-1) (Magnetospirillum magneticum)).